Consider the following 211-residue polypeptide: N-(5'-phosphoribosyl)anthranilate isomerase (211 aa).

This sequence belongs to the TrpF family.

The catalysed reaction is N-(5-phospho-beta-D-ribosyl)anthranilate = 1-(2-carboxyphenylamino)-1-deoxy-D-ribulose 5-phosphate. The protein operates within amino-acid biosynthesis; L-tryptophan biosynthesis; L-tryptophan from chorismate: step 3/5. The polypeptide is N-(5'-phosphoribosyl)anthranilate isomerase (Chromohalobacter salexigens (strain ATCC BAA-138 / DSM 3043 / CIP 106854 / NCIMB 13768 / 1H11)).